The following is a 414-amino-acid chain: MSEYIRVTEDESDEPIEIPSEDDGTVLLSTVTAQFPGACGLRYRNPVSQCMRGVRLVEGILHAPDAGWGNLVYVVNYPKDNKRKMDETDASSAVKVKRAVQKTSDLIVLGLPWKTTEQDLKEYFSTFGEVLMVQVKKDLKTGHSKGFGFVRFTEYETQVKVMSQRHMIDGRWCDCKLPNSKQSQDEPLRSRKVFVGRCTEDMTEDELREFFSQYGDVMDVFIPKPFRAFAFVTFADDQIAQSLCGEDLIIKGISVHISNAEPKHNSNRQLERSGRFGGNPGGFGNQGGFGNSRGGGAGLGNNQGSNMGGGMNFGAFSINPAMMAAAQAALQSSWGMMGMLASQQNQSGPSGNNQNQGNMQREPNQAFGSGNNSYSGSNSGAAIGWGSASNAGSGSGFNGGFGSSMDSKSSGWGM.

Residues Lys79, Lys84, Lys95, Lys102, and Lys181 each participate in a glycyl lysine isopeptide (Lys-Gly) (interchain with G-Cter in SUMO2) cross-link. RRM domains are found at residues 104-200 and 191-262; these read SDLI…RCTE and RKVF…NAEP. Residue Ser183 is modified to Phosphoserine. Residues 216 to 414 form an interaction with UBQLN2 region; the sequence is DVMDVFIPKP…MDSKSSGWGM (199 aa). Over residues 261-274 the composition is skewed to basic and acidic residues; the sequence is EPKHNSNRQLERSG. 2 disordered regions span residues 261–303 and 341–373; these read EPKH…GNNQ and ASQQNQSGPSGNNQNQGNMQREPNQAFGSGNNS. Lys263 is covalently cross-linked (Glycyl lysine isopeptide (Lys-Gly) (interchain with G-Cter in SUMO2)). Positions 275–303 are enriched in gly residues; that stretch reads RFGGNPGGFGNQGGFGNSRGGGAGLGNNQ. Ser292 is subject to Phosphoserine. Omega-N-methylarginine is present on Arg293. Low complexity predominate over residues 342 to 358; sequence SQQNQSGPSGNNQNQGN.

As to quaternary structure, monomer and component of the SFPQ-NONO complex, which is probably a heterotetramer of two 52 kDa (NONO) and two 100 kDa (SFPQ) subunits. NONO is a component of spliceosome and U5.4/6 snRNP complexes. Interacts with CPNE4 (via VWFA domain). Forms heterodimers with PSPC1; this involves formation of a coiled coil domain by helices from both proteins. Part of complex consisting of SFPQ, NONO and MATR3. Part of a complex consisting of SFPQ, NONO and NR5A1. Part of a complex consisting of SFPQ, NONO and TOP1. Interacts with SPI1. Interacts with RNF43. Interacts with PER1 and PER2. Part of the HDP-RNP complex composed of at least HEXIM1, PRKDC, XRCC5, XRCC6, paraspeckle proteins (SFPQ, NONO, PSPC1, RBM14, and MATR3) and NEAT1 RNA. Interacts (via second RRM domain) with WASL; the interaction is direct. Component of a multiprotein complex with WASL and SFPQ. Interacts with ERCC6. Interacts (via DNA-binding domain) with TET1. Hyperphosphorylated. Post-translationally, ubiquitinated.

The protein resides in the nucleus. It is found in the nucleolus. It localises to the nucleus speckle. Its subcellular location is the chromosome. The protein localises to the mitochondrion. Its function is as follows. DNA- and RNA binding protein, involved in several nuclear processes. Binds the conventional octamer sequence in double-stranded DNA. Also binds single-stranded DNA and RNA at a site independent of the duplex site. Involved in pre-mRNA splicing, probably as a heterodimer with SFPQ. Interacts with U5 snRNA, probably by binding to a purine-rich sequence located on the 3' side of U5 snRNA stem 1b. Together with PSPC1, required for the formation of nuclear paraspeckles. The SFPQ-NONO heteromer associated with MATR3 may play a role in nuclear retention of defective RNAs. The SFPQ-NONO heteromer may be involved in DNA unwinding by modulating the function of topoisomerase I/TOP1. The SFPQ-NONO heteromer may be involved in DNA non-homologous end joining (NHEJ) required for double-strand break repair and V(D)J recombination and may stabilize paired DNA ends. In vitro, the complex strongly stimulates DNA end joining, binds directly to the DNA substrates and cooperates with the Ku70/G22P1-Ku80/XRCC5 (Ku) dimer to establish a functional preligation complex. NONO is involved in transcriptional regulation. The SFPQ-NONO-NR5A1 complex binds to the CYP17 promoter and regulates basal and cAMP-dependent transcriptional activity. NONO binds to an enhancer element in long terminal repeats of endogenous intracisternal A particles (IAPs) and activates transcription. Regulates the circadian clock by repressing the transcriptional activator activity of the CLOCK-BMAL1 heterodimer. Important for the functional organization of GABAergic synapses. Plays a specific and important role in the regulation of synaptic RNAs and GPHN/gephyrin scaffold structure, through the regulation of GABRA2 transcript. Plays a key role during neuronal differentiation by recruiting TET1 to genomic loci and thereby regulating 5-hydroxymethylcytosine levels. Plays a role in the regulation of DNA virus-mediated innate immune response by assembling into the HDP-RNP complex, a complex that serves as a platform for IRF3 phosphorylation and subsequent innate immune response activation through the cGAS-STING pathway. The protein is TAR DNA-binding protein 43 (TARDBP) of Pongo abelii (Sumatran orangutan).